Here is a 338-residue protein sequence, read N- to C-terminus: Anthranilate phosphoribosyltransferase (338 aa).

5-phospho-alpha-D-ribose 1-diphosphate is bound by residues Gly81, 84 to 85 (GD), Thr89, 91 to 94 (NIST), 109 to 117 (KHGNRGVSS), and Ser121. Gly81 contributes to the anthranilate binding site. Ser93 lines the Mg(2+) pocket. Asn112 is an anthranilate binding site. Arg167 lines the anthranilate pocket. Asp225 and Glu226 together coordinate Mg(2+).

It belongs to the anthranilate phosphoribosyltransferase family. In terms of assembly, homodimer. Requires Mg(2+) as cofactor.

The catalysed reaction is N-(5-phospho-beta-D-ribosyl)anthranilate + diphosphate = 5-phospho-alpha-D-ribose 1-diphosphate + anthranilate. It participates in amino-acid biosynthesis; L-tryptophan biosynthesis; L-tryptophan from chorismate: step 2/5. Its function is as follows. Catalyzes the transfer of the phosphoribosyl group of 5-phosphorylribose-1-pyrophosphate (PRPP) to anthranilate to yield N-(5'-phosphoribosyl)-anthranilate (PRA). The protein is Anthranilate phosphoribosyltransferase of Methanoculleus marisnigri (strain ATCC 35101 / DSM 1498 / JR1).